We begin with the raw amino-acid sequence, 157 residues long: Ribosome maturation factor RimP (157 aa).

The protein belongs to the RimP family.

Its subcellular location is the cytoplasm. Its function is as follows. Required for maturation of 30S ribosomal subunits. The protein is Ribosome maturation factor RimP of Geobacillus sp. (strain WCH70).